The primary structure comprises 301 residues: Probable alpha-L-glutamate ligase 1 (301 aa).

In terms of domain architecture, ATP-grasp spans 104–287 (MQLMSRRGIG…VAGAIIAFIE (184 aa)). Residues Lys141, 178-179 (EY), Asp187, and 211-213 (RSN) contribute to the ATP site. Mg(2+)-binding residues include Asp248, Glu260, and Asn262. 3 residues coordinate Mn(2+): Asp248, Glu260, and Asn262.

It belongs to the RimK family. Requires Mg(2+) as cofactor. It depends on Mn(2+) as a cofactor.

The sequence is that of Probable alpha-L-glutamate ligase 1 from Shewanella amazonensis (strain ATCC BAA-1098 / SB2B).